The chain runs to 386 residues: Succinate--CoA ligase [ADP-forming] subunit beta (386 aa).

Residues 9–244 (KAVLRSYGVS…LDEEDSKEIE (236 aa)) enclose the ATP-grasp domain. Residues Lys-46, 53 to 55 (GRG), Glu-99, Cys-102, and Glu-107 each bind ATP. Mg(2+)-binding residues include Asn-199 and Asp-213. Substrate contacts are provided by residues Asn-264 and 321-323 (GIM).

It belongs to the succinate/malate CoA ligase beta subunit family. As to quaternary structure, heterotetramer of two alpha and two beta subunits. The cofactor is Mg(2+).

It carries out the reaction succinate + ATP + CoA = succinyl-CoA + ADP + phosphate. It catalyses the reaction GTP + succinate + CoA = succinyl-CoA + GDP + phosphate. It functions in the pathway carbohydrate metabolism; tricarboxylic acid cycle; succinate from succinyl-CoA (ligase route): step 1/1. In terms of biological role, succinyl-CoA synthetase functions in the citric acid cycle (TCA), coupling the hydrolysis of succinyl-CoA to the synthesis of either ATP or GTP and thus represents the only step of substrate-level phosphorylation in the TCA. The beta subunit provides nucleotide specificity of the enzyme and binds the substrate succinate, while the binding sites for coenzyme A and phosphate are found in the alpha subunit. The sequence is that of Succinate--CoA ligase [ADP-forming] subunit beta from Bacillus cereus (strain B4264).